The primary structure comprises 598 residues: Elongation factor 4 (598 aa).

The tr-type G domain occupies Lys4 to Gln181. Residues Asp16–Thr21 and Asn128–Asp131 each bind GTP.

Belongs to the TRAFAC class translation factor GTPase superfamily. Classic translation factor GTPase family. LepA subfamily.

It localises to the cell membrane. It catalyses the reaction GTP + H2O = GDP + phosphate + H(+). Its function is as follows. Required for accurate and efficient protein synthesis under certain stress conditions. May act as a fidelity factor of the translation reaction, by catalyzing a one-codon backward translocation of tRNAs on improperly translocated ribosomes. Back-translocation proceeds from a post-translocation (POST) complex to a pre-translocation (PRE) complex, thus giving elongation factor G a second chance to translocate the tRNAs correctly. Binds to ribosomes in a GTP-dependent manner. This is Elongation factor 4 from Mesomycoplasma hyopneumoniae (strain J / ATCC 25934 / NCTC 10110) (Mycoplasma hyopneumoniae).